A 338-amino-acid chain; its full sequence is 1-aminocyclopropane-1-carboxylate deaminase (338 aa).

Lys-51 carries the N6-(pyridoxal phosphate)lysine modification. Ser-78 functions as the Nucleophile in the catalytic mechanism.

Belongs to the ACC deaminase/D-cysteine desulfhydrase family. In terms of assembly, homotrimer. Pyridoxal 5'-phosphate serves as cofactor.

The catalysed reaction is 1-aminocyclopropane-1-carboxylate + H2O = 2-oxobutanoate + NH4(+). Functionally, catalyzes a cyclopropane ring-opening reaction, the irreversible conversion of 1-aminocyclopropane-1-carboxylate (ACC) to ammonia and alpha-ketobutyrate. Allows growth on ACC as a nitrogen source. The sequence is that of 1-aminocyclopropane-1-carboxylate deaminase from Burkholderia cenocepacia (strain ATCC BAA-245 / DSM 16553 / LMG 16656 / NCTC 13227 / J2315 / CF5610) (Burkholderia cepacia (strain J2315)).